Reading from the N-terminus, the 256-residue chain is Protein FixA (256 aa).

This sequence belongs to the ETF beta-subunit/FixA family. Heterodimer of FixA and FixB.

The protein operates within amine and polyamine metabolism; carnitine metabolism. Required for anaerobic carnitine reduction. May bring reductant to CaiA. The sequence is that of Protein FixA from Escherichia coli O6:H1 (strain CFT073 / ATCC 700928 / UPEC).